A 474-amino-acid polypeptide reads, in one-letter code: MTKKLHIKTWGCQMNEYDSSKMADLLNATHGYELTELAEEADVLLLNTCSIREKAQEKVFHLLGRWKLLKKKNPDLIIGVGGCVASQEGKLIRTRSPYVDIVFGPQTLHRLPEMINSVRGDRSPVVDVSFPEIEKFDRLPEPRADGPSAFVSIMEGCNKYCTYCVVPYTRGEEVSRPCDDILFEVAQLAAQGVREVNLLGQNVNAWRGENYDGSIGTFAELLRLVAAIDGIDRVRFTTSHPIEFTDDIIDVYRDTPELVSFLHLPVQCGSDRVLNLMGRTHTVLEYKAIIRKLREARPDIQISSDFIVGFPGETTDDFERTMKLIGEINFDVSFSFIFSARPGTPAADMVDDVPEEEKKQRLYILQERINQQVTAWSRRMLGTTQRILVEGTSRKSVMQLSGRTENNRVVNFEGTPDMIGKFVDIEILEVLTNSMRGKVVRTEDQMGLRVAETPASVIARTRKENDSGAVVYQP.

Residues 3-120 (KKLHIKTWGC…LPEMINSVRG (118 aa)) form the MTTase N-terminal domain. 6 residues coordinate [4Fe-4S] cluster: cysteine 12, cysteine 49, cysteine 83, cysteine 157, cysteine 161, and cysteine 164. Positions 143–378 (RADGPSAFVS…INQQVTAWSR (236 aa)) constitute a Radical SAM core domain. The TRAM domain maps to 378–441 (RRMLGTTQRI…TNSMRGKVVR (64 aa)).

The protein belongs to the methylthiotransferase family. MiaB subfamily. Monomer. [4Fe-4S] cluster serves as cofactor.

It localises to the cytoplasm. The catalysed reaction is N(6)-dimethylallyladenosine(37) in tRNA + (sulfur carrier)-SH + AH2 + 2 S-adenosyl-L-methionine = 2-methylsulfanyl-N(6)-dimethylallyladenosine(37) in tRNA + (sulfur carrier)-H + 5'-deoxyadenosine + L-methionine + A + S-adenosyl-L-homocysteine + 2 H(+). Catalyzes the methylthiolation of N6-(dimethylallyl)adenosine (i(6)A), leading to the formation of 2-methylthio-N6-(dimethylallyl)adenosine (ms(2)i(6)A) at position 37 in tRNAs that read codons beginning with uridine. This chain is tRNA-2-methylthio-N(6)-dimethylallyladenosine synthase, found in Enterobacter sp. (strain 638).